Consider the following 359-residue polypeptide: DNA-directed RNA polymerase subunit alpha (359 aa).

Residues 1-226 are alpha N-terminal domain (alpha-NTD); it reads MLISQRPSLA…ELFGLARELN (226 aa). The segment at 241–359 is alpha C-terminal domain (alpha-CTD); the sequence is ADTIAAYAMP…GQDYAETEQL (119 aa). A disordered region spans residues 315-359; it reads FDPSAAAAEYPSEGWASETETVGGLGRVEDNGYDDGQDYAETEQL. A compositionally biased stretch (acidic residues) spans 345–359; it reads NGYDDGQDYAETEQL.

The protein belongs to the RNA polymerase alpha chain family. Homodimer. The RNAP catalytic core consists of 2 alpha, 1 beta, 1 beta' and 1 omega subunit. When a sigma factor is associated with the core the holoenzyme is formed, which can initiate transcription.

It catalyses the reaction RNA(n) + a ribonucleoside 5'-triphosphate = RNA(n+1) + diphosphate. DNA-dependent RNA polymerase catalyzes the transcription of DNA into RNA using the four ribonucleoside triphosphates as substrates. This Saccharopolyspora erythraea (strain ATCC 11635 / DSM 40517 / JCM 4748 / NBRC 13426 / NCIMB 8594 / NRRL 2338) protein is DNA-directed RNA polymerase subunit alpha.